Reading from the N-terminus, the 642-residue chain is UvrABC system protein C (642 aa).

The 78-residue stretch at 20–97 (ERCGVYRMFD…IKKFQPKFNI (78 aa)) folds into the GIY-YIG domain. The 36-residue stretch at 207 to 242 (KELQENLSKKMEELSSQMRFEEAAEIRDRIKALSYV) folds into the UVR domain.

It belongs to the UvrC family. As to quaternary structure, interacts with UvrB in an incision complex.

The protein localises to the cytoplasm. In terms of biological role, the UvrABC repair system catalyzes the recognition and processing of DNA lesions. UvrC both incises the 5' and 3' sides of the lesion. The N-terminal half is responsible for the 3' incision and the C-terminal half is responsible for the 5' incision. This chain is UvrABC system protein C, found in Rickettsia felis (strain ATCC VR-1525 / URRWXCal2) (Rickettsia azadi).